Here is a 264-residue protein sequence, read N- to C-terminus: 3-methyl-2-oxobutanoate hydroxymethyltransferase (264 aa).

Mg(2+)-binding residues include Asp-45 and Asp-84. 3-methyl-2-oxobutanoate is bound by residues 45-46, Asp-84, and Lys-112; that span reads DS. Residue Glu-114 participates in Mg(2+) binding. Catalysis depends on Glu-181, which acts as the Proton acceptor.

Belongs to the PanB family. As to quaternary structure, homodecamer; pentamer of dimers. Mg(2+) is required as a cofactor.

Its subcellular location is the cytoplasm. It catalyses the reaction 3-methyl-2-oxobutanoate + (6R)-5,10-methylene-5,6,7,8-tetrahydrofolate + H2O = 2-dehydropantoate + (6S)-5,6,7,8-tetrahydrofolate. It functions in the pathway cofactor biosynthesis; (R)-pantothenate biosynthesis; (R)-pantoate from 3-methyl-2-oxobutanoate: step 1/2. Catalyzes the reversible reaction in which hydroxymethyl group from 5,10-methylenetetrahydrofolate is transferred onto alpha-ketoisovalerate to form ketopantoate. The polypeptide is 3-methyl-2-oxobutanoate hydroxymethyltransferase (Colwellia psychrerythraea (strain 34H / ATCC BAA-681) (Vibrio psychroerythus)).